The chain runs to 1985 residues: Voltage-dependent L-type calcium channel subunit alpha-1F (1985 aa).

Over residues 1-11 (MSESEVGKDTT) the composition is skewed to basic and acidic residues. Residues 1–56 (MSESEVGKDTTPEPSPANGTGPGPEWGLCPGPPTVGTDTSGASGLGTPRRRTQHNK) form a disordered region. The Cytoplasmic segment spans residues 1–92 (MSESEVGKDT…RSCISIVEWK (92 aa)). The I repeat unit spans residues 79 to 375 (NPIRRSCISI…LVLGVLSGEF (297 aa)). Residues 93 to 111 (PFDILILLTIFANCVALGV) traverse the membrane as a helical segment. Topologically, residues 112-129 (YIPFPEDDSNTANHNLEQ) are extracellular. Residues 130–149 (VEYVFLVIFTVETVLKIVAY) form a helical membrane-spanning segment. Topologically, residues 150–161 (GLVLHPSAYIRN) are cytoplasmic. A helical transmembrane segment spans residues 162 to 180 (GWNLLDFIIVVVGLFSVLL). The Extracellular segment spans residues 181 to 201 (EQGPGRPGDAPHTGGKPGGFD). A helical membrane pass occupies residues 202–220 (VKALRAFRVLRPLRLVSGV). Residues 221–239 (PSLHIVVNSIMKALVPLLH) lie on the Cytoplasmic side of the membrane. Residues 240 to 259 (IALLVLFVIIIYAIIGLELF) traverse the membrane as a helical segment. The Extracellular segment spans residues 260–347 (LGRMHKTCYF…WMQDAMGYEL (88 aa)). Asn-295 carries N-linked (GlcNAc...) asparagine glycosylation. A Ca(2+)-binding site is contributed by Glu-330. Residues 348 to 372 (PWVYFVSLVIFGSFFVLNLVLGVLS) form a helical membrane-spanning segment. At 373–529 (GEFSKEREKA…ARCRRAVKSN (157 aa)) the chain is on the cytoplasmic side. The tract at residues 395-412 (QQMEEDLRGYLDWITQAE) is binding to the beta subunit. Positions 455 to 469 (SHSTRSTHSTSSHAS) are enriched in low complexity. Residues 455–490 (SHSTRSTHSTSSHASLPASDTGSMTDTPGDEDEEEG) form a disordered region. Residues 515–761 (NRGLRARCRR…VFLAIAVDNL (247 aa)) form an II repeat. Residues 530 to 549 (ACYWAVLLLVFLNTLTIASE) form a helical membrane-spanning segment. The Extracellular portion of the chain corresponds to 550–564 (HHGQPLWLTQTQEYA). A helical membrane pass occupies residues 565–583 (NKVLLCLFTVEMLLKLYGL). Residues 584-591 (GPSVYVAS) lie on the Cytoplasmic side of the membrane. A helical transmembrane segment spans residues 592-610 (FFNRFDCFVVCGGILETTL). Residues 611–620 (VEVGAMQPLG) are Extracellular-facing. Residues 621–639 (ISVLRCVRLLRIFKVTRHW) form a helical membrane-spanning segment. Topologically, residues 640–658 (ASLSNLVASLLNSMKSIAS) are cytoplasmic. The helical transmembrane segment at 659-679 (LLLLLFLFIIIFSLLGMQLFG) threads the bilayer. Topologically, residues 680–733 (GKFNFDQTHTKRSTFDTFPQALLTVFQILTGEDWNVVMYDGIMAYGGPFFPGML) are extracellular. Glu-711 contacts Ca(2+). Residues 734 to 758 (VCVYFIILFICGNYILLNVFLAIAV) form a helical membrane-spanning segment. Topologically, residues 759-876 (DNLASGDAGT…KACHTLIHHH (118 aa)) are cytoplasmic. The interval 766–834 (AGTAKDKGRE…EEEEENGAGH (69 aa)) is disordered. The span at 768–787 (TAKDKGREKSSEGNPPKENK) shows a compositional bias: basic and acidic residues. Acidic residues predominate over residues 810-830 (MEEEEEEEEEEEEEEEEEEEN). The stretch at 858-1140 (CLSQTNPLRK…FFMMNIFVGF (283 aa)) is one III repeat. A helical membrane pass occupies residues 877–895 (IFTSLILVFIILSSVSLAA). Topologically, residues 896 to 911 (EDPIRAHSFRNHILGY) are extracellular. A helical membrane pass occupies residues 912–931 (FDYAFTSIFTVEILLKMTVF). The Cytoplasmic portion of the chain corresponds to 932-943 (GAFLHRGSFCRS). The chain crosses the membrane as a helical span at residues 944 to 962 (WFNLLDLLVVSVSLISFGI). Residues 963–968 (HSSAIS) lie on the Extracellular side of the membrane. Residues 969–988 (VVKILRVLRVLRPLRAINRA) traverse the membrane as a helical segment. At 989–1007 (KGLKHVVQCVFVAIRTIGN) the chain is on the cytoplasmic side. The helical transmembrane segment at 1008–1027 (IMIVTTLLQFMFACIGVQLF) threads the bilayer. The Extracellular segment spans residues 1028–1117 (KGKFYSCTDE…EGPIYNYHVE (90 aa)). A dihydropyridine binding region spans residues 1065–1155 (RLWVNSDFNF…RAQGEQEYQN (91 aa)). Residue Glu-1091 coordinates Ca(2+). Residues 1118 to 1138 (ISVFFIVYIIIIAFFMMNIFV) form a helical membrane-spanning segment. The Cytoplasmic segment spans residues 1139 to 1195 (GFVIITFRAQGEQEYQNCELDKNQRQCVEYALKAQPLRRYIPKNPHQYRVWATVNSR). The stretch at 1182-1449 (NPHQYRVWAT…LFVAVIMDNF (268 aa)) is one IV repeat. The helical transmembrane segment at 1196 to 1214 (AFEYLMFLLILLNTVALAM) threads the bilayer. At 1215–1229 (QHYEQTAPFNYAMDI) the chain is on the extracellular side. The helical transmembrane segment at 1230 to 1249 (LNMVFTGLFTIEMVLKIIAF) threads the bilayer. At 1250–1256 (KPKHYFA) the chain is on the cytoplasmic side. A helical membrane pass occupies residues 1257–1278 (DAWNTFDALIVVGSVVDIAVTE). Residues 1279–1295 (VNNGGHLGESSEDTSRI) lie on the Extracellular side of the membrane. Residues 1296–1315 (SITFFRLFRVMRLVKLLSKG) form a helical membrane-spanning segment. The Cytoplasmic segment spans residues 1316 to 1334 (EGIRTLLWTFIKSFQALPY). A helical membrane pass occupies residues 1335-1354 (VALLIAMIFFIYAVIGMQMF). Topologically, residues 1355–1421 (GLVALQDGTQ…GEEFTCGSSF (67 aa)) are extracellular. Residues 1402–1468 (RCDPESDFGP…LGPHHLDEFK (67 aa)) form a dihydropyridine binding region. The interval 1414–1457 (EFTCGSSFAIVYFISFFMLCAFLIINLFVAVIMDNFDYLTRDWS) is phenylalkylamine binding. A helical membrane pass occupies residues 1422–1446 (AIVYFISFFMLCAFLIINLFVAVIM). Residues 1447 to 1982 (DNFDYLTRDW…EDLGDEMACV (536 aa)) lie on the Cytoplasmic side of the membrane. Disordered regions lie at residues 1643–1729 (VTEE…PHRR) and 1746–1778 (LKGTQGQDNQNEEQELPDWTPDLDRAGRDSFEP). Acidic residues predominate over residues 1644 to 1665 (TEEEEEEEEAVGQEAEEEEAEN). Polar residues-rich tracts occupy residues 1675 to 1687 (DSQPQSRWNSRIS) and 1713 to 1724 (NSRQPSVIQAGS). Basic and acidic residues predominate over residues 1767–1776 (DLDRAGRDSF).

It belongs to the calcium channel alpha-1 subunit (TC 1.A.1.11) family. CACNA1F subfamily. In terms of assembly, voltage-dependent calcium channels are multisubunit complexes, consisting of alpha-1, alpha-2, beta and delta subunits in a 1:1:1:1 ratio. The channel activity is directed by the pore-forming and voltage-sensitive alpha-1 subunit. In many cases, this subunit is sufficient to generate voltage-sensitive calcium channel activity. The auxiliary subunits beta and alpha-2/delta linked by a disulfide bridge regulate the channel activity. Interacts (via IQ domain) with CABP4; in a calcium independent manner. As to expression, expressed in the inner and outer nuclear layers and the genglion cell layer of the retina.

Its subcellular location is the membrane. It carries out the reaction Ca(2+)(in) = Ca(2+)(out). Functionally, voltage-sensitive calcium channels (VSCC) mediate the entry of calcium ions into excitable cells and are also involved in a variety of calcium-dependent processes, including muscle contraction, hormone or neurotransmitter release, gene expression, cell motility, cell division and cell death. The isoform alpha-1F gives rise to L-type calcium currents. Long-lasting (L-type) calcium channels belong to the 'high-voltage activated' (HVA) group. They are blocked by dihydropyridines (DHP), phenylalkylamines, and by benzothiazepines. Activates at more negative voltages and does not undergo calcium-dependent inactivation (CDI), due to incoming calcium ions, during depolarization. The protein is Voltage-dependent L-type calcium channel subunit alpha-1F of Mus musculus (Mouse).